The primary structure comprises 376 residues: Cobalt-precorrin-5B C(1)-methyltransferase (376 aa).

This sequence belongs to the CbiD family.

The catalysed reaction is Co-precorrin-5B + S-adenosyl-L-methionine = Co-precorrin-6A + S-adenosyl-L-homocysteine. It functions in the pathway cofactor biosynthesis; adenosylcobalamin biosynthesis; cob(II)yrinate a,c-diamide from sirohydrochlorin (anaerobic route): step 6/10. Functionally, catalyzes the methylation of C-1 in cobalt-precorrin-5B to form cobalt-precorrin-6A. The protein is Cobalt-precorrin-5B C(1)-methyltransferase of Bradyrhizobium sp. (strain BTAi1 / ATCC BAA-1182).